The primary structure comprises 426 residues: Stationary phase-inducible protein CsiE (426 aa).

PRD domains are found at residues 120–225 and 229–336; these read ARNF…DPLR and QRDR…ENDL.

The sequence is that of Stationary phase-inducible protein CsiE (csiE) from Escherichia coli (strain K12).